The sequence spans 657 residues: MADKIQLMKDKIEILDRAAKAYYQENTEIMSNIEYDKLYDELLELEKETGVVLSNSPSIHVGYELLSNLPKERHEKPMLSLDKTKDVGTLKEWLGTQKGILSWKLDGLTIVLTYQDGHLVKAVTRGTGEEGEVITNNARVFRNLPVTIAYKGTLILRGEAIIRYSDFIKINNEIADVGVKYKNPRNLCSGSVRQLNNKVTSERNVYFFGFSLVKADNVELDNSRASQMNWLKNQGFDIVDFKEVTSSNIEETVQWFSQNIEANDFPSDGLVLTFEDIAYGESLGSTAKFPRDSIAFKWRDEIKETTLLNIEWSPSRTGLINPIAIFEPVELEGTTVSRASIHNISIMEGLELGIGDTIGVYKANMIIPQISENLTRSGMAPIPEECPVCKGKTEIKQENGVKTLYCVNNECLAKQIKSFTHFVGRDAMNMEGLSEATLEKLIAKGLIKELADLFHIEKYKNEILELEGLGEKSFNKLITSINKARKTTAVRLLYSLGIPNVGLSNAKLICRYFKYDWNKIENAEFSELIQIGGIGDIMAESFIRFFSDEKKKVIVQDVLNELELEEVQLSQSEQIFENLNFVITGSVEQFKNRDELKDVIEEKGGKVTGAVTSKTNYLINNDNMSNSSKNKKAKELNISIITEAQFLEWLNNGVRPE.

Position 80 to 81 (80 to 81 (SL)) interacts with NAD(+). The active-site N6-AMP-lysine intermediate is Lys-104. Residues Arg-125, Glu-159, and Lys-297 each contribute to the NAD(+) site. The Zn(2+) site is built by Cys-386, Cys-389, Cys-406, and Cys-411. The BRCT domain maps to 571–657 (QSEQIFENLN…EWLNNGVRPE (87 aa)).

The protein belongs to the NAD-dependent DNA ligase family. LigA subfamily. Requires Mg(2+) as cofactor. It depends on Mn(2+) as a cofactor.

The catalysed reaction is NAD(+) + (deoxyribonucleotide)n-3'-hydroxyl + 5'-phospho-(deoxyribonucleotide)m = (deoxyribonucleotide)n+m + AMP + beta-nicotinamide D-nucleotide.. DNA ligase that catalyzes the formation of phosphodiester linkages between 5'-phosphoryl and 3'-hydroxyl groups in double-stranded DNA using NAD as a coenzyme and as the energy source for the reaction. It is essential for DNA replication and repair of damaged DNA. The sequence is that of DNA ligase from Ruminiclostridium cellulolyticum (strain ATCC 35319 / DSM 5812 / JCM 6584 / H10) (Clostridium cellulolyticum).